Here is a 216-residue protein sequence, read N- to C-terminus: Endoplasmic reticulum vesicle protein 25 (216 aa).

The signal sequence occupies residues 1 to 21 (MMVSLKSSLFFMLALLTVVHA). Topologically, residues 22–184 (LNFDIPAKTN…TNESTNERVK (163 aa)) are lumenal. Residues 34–150 (PFCLREYVGE…LEPVEADIRR (117 aa)) form the GOLD domain. A helical transmembrane segment spans residues 185-205 (NFAYLTFISLFVLVIWQILYL). At 206–216 (RSFFQRKHLIP) the chain is on the cytoplasmic side.

This sequence belongs to the EMP24/GP25L family.

The protein resides in the endoplasmic reticulum membrane. The protein localises to the golgi apparatus membrane. Constituent of COPII-coated endoplasmic reticulum-derived transport vesicles. Required for efficient transport of a subset of secretory proteins to the Golgi. Facilitates retrograde transport from the Golgi to the endoplasmic reticulum. This Schizosaccharomyces pombe (strain 972 / ATCC 24843) (Fission yeast) protein is Endoplasmic reticulum vesicle protein 25 (erv25).